The chain runs to 233 residues: 7-cyano-7-deazaguanine synthase (233 aa).

7–17 serves as a coordination point for ATP; it reads LSGGLDSAVTS. Cys-195, Cys-206, Cys-209, and Cys-212 together coordinate Zn(2+).

This sequence belongs to the QueC family. It depends on Zn(2+) as a cofactor.

The enzyme catalyses 7-carboxy-7-deazaguanine + NH4(+) + ATP = 7-cyano-7-deazaguanine + ADP + phosphate + H2O + H(+). It participates in purine metabolism; 7-cyano-7-deazaguanine biosynthesis. In terms of biological role, catalyzes the ATP-dependent conversion of 7-carboxy-7-deazaguanine (CDG) to 7-cyano-7-deazaguanine (preQ(0)). This is 7-cyano-7-deazaguanine synthase from Methanococcus maripaludis (strain DSM 14266 / JCM 13030 / NBRC 101832 / S2 / LL).